The primary structure comprises 287 residues: MKGFIFAGVLVSALICLAEGKPFDNLELVEDDMLMTKEQKEAYLAHQNGRVRRAALRDRYLWPQGKIPYTFSDDIDQAGRELAERAMNHWMSRTCLRFSPRRREHAYIEFQYDGRCRARVGYTGEARQKVSIGSALDPCPLGSVIHELGHGIGFFHEHSRPDRDEYVNINVNNMREGAESNFRKDNGYFVDSRGQDYDYGSIMHYSKYQGNNAFNAVVMEPIQRGAEIGQRDGLSAGDIRQTNLMYKCNAQGDSELQPVNDEDEDKDGGDSKKKPDPKGPKPGEIEE.

Positions Met-1 to Gly-20 are cleaved as a signal peptide. Positions Arg-53–Asn-249 constitute a Peptidase M12A domain. 2 disulfides stabilise this stretch: Cys-95–Cys-248 and Cys-116–Cys-139. Residue His-146 participates in Zn(2+) binding. Residue Glu-147 is part of the active site. Zn(2+)-binding residues include His-150 and His-156. Residues Asn-249–Glu-287 form a disordered region. Residues Gly-268 to Glu-287 show a composition bias toward basic and acidic residues.

Zn(2+) serves as cofactor. Nematocyte and pharyngeal gland.

Its subcellular location is the secreted. It localises to the nematocyst. Metalloprotease. In Nematostella vectensis (Starlet sea anemone), this protein is Nematocyst expressed protein 6.